The primary structure comprises 83 residues: MLDAILSNYLYYPSILAFLFGVLMGAKYRHKIGNIFGYLILTVVIAYFLKAFPYYDLLPLSCSYLSAVIGIIIGNRLFGGKMI.

3 helical membrane passes run 4–24, 32–52, and 54–74; these read AILS…GVLM, IGNI…LKAF, and YYDL…IIIG.

It localises to the cell membrane. This is an uncharacterized protein from Methanocaldococcus jannaschii (strain ATCC 43067 / DSM 2661 / JAL-1 / JCM 10045 / NBRC 100440) (Methanococcus jannaschii).